The primary structure comprises 167 residues: CDP-archaeol synthase (167 aa).

Helical transmembrane passes span 4–24 (ILEA…PVIL), 51–71 (GFLG…IIYP), 80–100 (FKVS…GSFI), 104–124 (LNLP…LISA), and 139–158 (VLLL…VLAY).

It belongs to the CDP-archaeol synthase family. Mg(2+) serves as cofactor.

Its subcellular location is the cell membrane. It catalyses the reaction 2,3-bis-O-(geranylgeranyl)-sn-glycerol 1-phosphate + CTP + H(+) = CDP-2,3-bis-O-(geranylgeranyl)-sn-glycerol + diphosphate. It participates in membrane lipid metabolism; glycerophospholipid metabolism. In terms of biological role, catalyzes the formation of CDP-2,3-bis-(O-geranylgeranyl)-sn-glycerol (CDP-archaeol) from 2,3-bis-(O-geranylgeranyl)-sn-glycerol 1-phosphate (DGGGP) and CTP. This reaction is the third ether-bond-formation step in the biosynthesis of archaeal membrane lipids. In Pyrococcus furiosus (strain ATCC 43587 / DSM 3638 / JCM 8422 / Vc1), this protein is CDP-archaeol synthase.